A 269-amino-acid polypeptide reads, in one-letter code: Diaminopimelate epimerase (269 aa).

Substrate-binding residues include N13, Q46, and N65. Residue C74 is the Proton donor of the active site. Substrate-binding positions include 75 to 76, N149, N182, and 200 to 201; these read GN and ER. C209 acts as the Proton acceptor in catalysis. 210–211 lines the substrate pocket; that stretch reads GT.

It belongs to the diaminopimelate epimerase family. In terms of assembly, homodimer.

It localises to the cytoplasm. It catalyses the reaction (2S,6S)-2,6-diaminopimelate = meso-2,6-diaminopimelate. The protein operates within amino-acid biosynthesis; L-lysine biosynthesis via DAP pathway; DL-2,6-diaminopimelate from LL-2,6-diaminopimelate: step 1/1. Functionally, catalyzes the stereoinversion of LL-2,6-diaminopimelate (L,L-DAP) to meso-diaminopimelate (meso-DAP), a precursor of L-lysine and an essential component of the bacterial peptidoglycan. This Zymomonas mobilis subsp. mobilis (strain ATCC 31821 / ZM4 / CP4) protein is Diaminopimelate epimerase.